The primary structure comprises 400 residues: Cytohesin-3 (400 aa).

Residues 14 to 61 are a coiled coil; that stretch reads EDLSLEEREELLDIRRRKKELIDDIERLKYEIAEVMTEIDNLTSVEES. One can recognise an SEC7 domain in the interval 77 to 206; the sequence is FNMDPKKGIQ…IIMLNTSLHN (130 aa). The PH domain occupies 264-381; that stretch reads NPDREGWLLK…WMKSIKASIS (118 aa). A 1,2-diacyl-sn-glycero-3-phospho-(1D-myo-inositol-3,4,5-trisphosphate)-binding positions include 273-281, Arg285, Tyr296, Arg306, and Asn355; that span reads KLGGGRVKT. A C-terminal autoinhibitory region region spans residues 392-400; that stretch reads RKRRIANKK.

Interacts with TAMALIN. Interacts with ARF6. Interacts with FRMD4A. Interacts with FRMD4B. Almost absent from liver, thymus and peripheral blood lymphocytes.

It is found in the cytoplasm. The protein localises to the cytosol. It localises to the cell membrane. Its subcellular location is the cell junction. The protein resides in the adherens junction. It is found in the tight junction. Functionally, promotes guanine-nucleotide exchange on ARF1 and ARF6. Promotes the activation of ARF factors through replacement of GDP with GTP. Plays a role in the epithelial polarization. This chain is Cytohesin-3, found in Homo sapiens (Human).